Reading from the N-terminus, the 268-residue chain is Hydroxyethylthiazole kinase 2 (268 aa).

Methionine 42 contributes to the substrate binding site. Residues lysine 117 and threonine 167 each contribute to the ATP site. A substrate-binding site is contributed by glycine 194.

Belongs to the Thz kinase family. Mg(2+) is required as a cofactor.

It catalyses the reaction 5-(2-hydroxyethyl)-4-methylthiazole + ATP = 4-methyl-5-(2-phosphooxyethyl)-thiazole + ADP + H(+). It participates in cofactor biosynthesis; thiamine diphosphate biosynthesis; 4-methyl-5-(2-phosphoethyl)-thiazole from 5-(2-hydroxyethyl)-4-methylthiazole: step 1/1. Its function is as follows. Catalyzes the phosphorylation of the hydroxyl group of 4-methyl-5-beta-hydroxyethylthiazole (THZ). The chain is Hydroxyethylthiazole kinase 2 from Streptococcus pneumoniae (strain CGSP14).